The primary structure comprises 500 residues: Trehalose-6-phosphate synthase (500 aa).

Arg28 is a D-glucose 6-phosphate binding site. 48 to 49 (GG) is a binding site for UDP-alpha-D-glucose. D-glucose 6-phosphate contacts are provided by Tyr108 and Asp162. The UDP-alpha-D-glucose site is built by Arg304 and Lys309. Arg342 contributes to the D-glucose 6-phosphate binding site. 407 to 411 (LVAKE) lines the UDP-alpha-D-glucose pocket.

This sequence belongs to the glycosyltransferase 20 family. Homotetramer.

The catalysed reaction is ADP-alpha-D-glucose + D-glucose 6-phosphate = alpha,alpha-trehalose 6-phosphate + ADP + H(+). It catalyses the reaction CDP-alpha-D-glucose + D-glucose 6-phosphate = alpha,alpha-trehalose 6-phosphate + CDP + H(+). It carries out the reaction GDP-alpha-D-glucose + D-glucose 6-phosphate = alpha,alpha-trehalose 6-phosphate + GDP + H(+). The enzyme catalyses TDP-alpha-D-glucose + D-glucose 6-phosphate = 5-methyl-UDP + alpha,alpha-trehalose 6-phosphate + H(+). The catalysed reaction is D-glucose 6-phosphate + UDP-alpha-D-glucose = alpha,alpha-trehalose 6-phosphate + UDP + H(+). The protein operates within glycan biosynthesis; trehalose biosynthesis. Functionally, probably involved in the osmoprotection via the biosynthesis of trehalose and in the production of glycogen and alpha-glucan via the TreS-Pep2 branch involved in the biosynthesis of maltose-1-phosphate (M1P). Catalyzes the transfer of glucose from UDP-glucose (UDP-Glc) to D-glucose 6-phosphate (Glc-6-P) to form trehalose-6-phosphate. Probably also able to use ADP-Glc, CDP-Glc, GDP-Glc and TDP-Glc as glucosyl donors. This is Trehalose-6-phosphate synthase from Mycobacterium tuberculosis (strain CDC 1551 / Oshkosh).